The chain runs to 330 residues: tRNA-modifying protein YgfZ (330 aa).

The folate site is built by Trp-28 and Trp-190.

The protein belongs to the tRNA-modifying YgfZ family.

The protein localises to the cytoplasm. Its function is as follows. Folate-binding protein involved in regulating the level of ATP-DnaA and in the modification of some tRNAs. It is probably a key factor in regulatory networks that act via tRNA modification, such as initiation of chromosomal replication. This is tRNA-modifying protein YgfZ from Yersinia pseudotuberculosis serotype IB (strain PB1/+).